A 366-amino-acid polypeptide reads, in one-letter code: Beta-1,3-glucan-binding protein (366 aa).

Positions 1 to 17 are cleaved as a signal peptide; that stretch reads MKGFVASVVLLACGALA. The GH16 domain maps to 18-364; the sequence is ADIVEPEDCT…YVRVWKMEST (347 aa). N-linked (GlcNAc...) asparagine glycosylation occurs at Asn-66.

The protein belongs to the glycosyl hydrolase 16 family. As to expression, constitutively expressed in hemocytes.

The protein resides in the secreted. In terms of biological role, binds to beta-1,3-glucan. May play a role in recognition of microorganisms and in activation of the prophenoloxidase cascade. The sequence is that of Beta-1,3-glucan-binding protein from Penaeus monodon (Giant tiger prawn).